A 559-amino-acid chain; its full sequence is Neutral amino acid transporter 9 (559 aa).

The Cytoplasmic segment spans residues 1–118 (MANVDSDSRH…YTEGYRKNTS (118 aa)). A helical transmembrane segment spans residues 119–139 (LVTIFMIWNTMMGTSILSIPW). The interval 128–133 (TMMGTS) is important for arginine binding and amino acid transport. Ser-133 serves as a coordination point for arginine. The Lumenal segment spans residues 140 to 145 (GIKQAG). Residues 146 to 166 (FTTGMCVIVLMGLLTLYCCYR) form a helical membrane-spanning segment. The Cytoplasmic segment spans residues 167–197 (VVKSRSMIVTSDTTTWEYPDVCKHYFGSFGQ). The helical transmembrane segment at 198-224 (WSSLLFSLVSLIGAMIVYWVLMSNFLF) threads the bilayer. Residues 225-281 (NTGKFIFNFIHHINDTDTVLSTNNSSPVICPSAGSGHPDNSSMIFYNSDTEVRLFER) are Lumenal-facing. N-linked (GlcNAc...) asparagine glycosylation is found at Asn-238, Asn-247, and Asn-264. A disulfide bond links Cys-254 and Cys-422. Residues 282-298 (WWDKSKTVPFYLIGLLL) traverse the membrane as a helical segment. The Cytoplasmic portion of the chain corresponds to 299–307 (PLLNFKSPS). Residues 308-332 (FFSKFNILGTVSVLYLIFIVTLKAI) form a helical membrane-spanning segment. Residues 333 to 354 (RLGFHLEFHWFAPTEFFVPEIR) lie on the Lumenal side of the membrane. Residues 355 to 375 (AQFPQLTGVLTLAFFIHNCII) form a helical membrane-spanning segment. At 376 to 392 (TLLKNNKNQENNVRDLC) the chain is on the cytoplasmic side. The chain crosses the membrane as a helical span at residues 393–413 (IAYMLVTLTYLYIGVLVFASF). Residues 414–435 (PSPPLPKDCIEQNFLDNFPSSD) are Lumenal-facing. A helical transmembrane segment spans residues 436–456 (TLSFIARICLLFQMMTVYPLL). A CARC motif motif is present at residues 442 to 452 (RICLLFQMMTV). A CRAC motif motif is present at residues 455-461 (LLGYLAR). Residues 457–477 (GYLARVQLLGHIFGDIYPSIF) are Cytoplasmic-facing. A helical transmembrane segment spans residues 478–498 (HVLILNLIIVGAGVTMACFYP). Topologically, residues 499 to 505 (NIGGIIR) are lumenal. A helical transmembrane segment spans residues 506 to 526 (YSGAACGLAFVFIYPSLIYIL). Residues 527–538 (SQHQEERLTWPK) lie on the Cytoplasmic side of the membrane. A helical transmembrane segment spans residues 539–559 (LVFHIIIIILGLANLIAQFFM).

Belongs to the amino acid/polyamine transporter 2 family. SLC38A9 subfamily. As to quaternary structure, associated component of the Ragulator complex (composed of LAMTOR1, LAMTOR2, LAMTOR3, LAMTOR4 and LAMTOR5). Associated component of the Rag GTPases heterodimers (composed of RRAGA, RRAGB, RRAGC and RRAGD); this interaction is independent of the Ragulator complex but depends on the nucleotide loading state of the Rag GTPase heterodimer. Interacts with TM4SF5. Interacts with NPC1; this interaction inhibits cholesterol-mediated mTORC1 activation via its sterol transport activity. Post-translationally, glycosylated.

The protein resides in the lysosome membrane. The protein localises to the late endosome membrane. The enzyme catalyses L-leucine(in) = L-leucine(out). It catalyses the reaction L-tyrosine(in) = L-tyrosine(out). It carries out the reaction L-glutamine(out) = L-glutamine(in). The catalysed reaction is L-asparagine(out) = L-asparagine(in). In terms of biological role, lysosomal amino acid transporter involved in the activation of mTORC1 in response to amino acid levels. Probably acts as an amino acid sensor of the Rag GTPases and Ragulator complexes, 2 complexes involved in amino acid sensing and activation of mTORC1, a signaling complex promoting cell growth in response to growth factors, energy levels, and amino acids. Following activation by amino acids, the Ragulator and Rag GTPases function as a scaffold recruiting mTORC1 to lysosomes where it is in turn activated. SLC38A9 mediates transport of amino acids with low capacity and specificity with a slight preference for polar amino acids. Acts as an arginine sensor. Following activation by arginine binding, mediates transport of L-glutamine, leucine and tyrosine with high efficiency, and is required for the efficient utilization of these amino acids after lysosomal protein degradation. However, the transport mechanism is not well defined and the role of sodium is not clear. Can disassemble the lysosomal folliculin complex (LFC), and thereby triggers GAP activity of FLCN:FNIP2 toward RRAGC. Acts as an cholesterol sensor that conveys increases in lysosomal cholesterol, leading to lysosomal recruitment and activation of mTORC1 via the Rag GTPases. Guanine exchange factor (GEF) that, upon arginine binding, stimulates GDP release from RRAGA and therefore activates the Rag GTPase heterodimer and the mTORC1 pathway in response to nutrient sufficiency. This chain is Neutral amino acid transporter 9, found in Rattus norvegicus (Rat).